Here is a 314-residue protein sequence, read N- to C-terminus: Homoserine kinase (314 aa).

Residue 95–105 (PHSRGLGSSAS) participates in ATP binding.

The protein belongs to the GHMP kinase family. Homoserine kinase subfamily.

Its subcellular location is the cytoplasm. It carries out the reaction L-homoserine + ATP = O-phospho-L-homoserine + ADP + H(+). It functions in the pathway amino-acid biosynthesis; L-threonine biosynthesis; L-threonine from L-aspartate: step 4/5. Catalyzes the ATP-dependent phosphorylation of L-homoserine to L-homoserine phosphate. The protein is Homoserine kinase of Rhodococcus erythropolis (strain PR4 / NBRC 100887).